Consider the following 1047-residue polypeptide: Exportin-6 (1047 aa).

The region spanning 32-98 (IDTILNNYKA…KGLLLDIYLN (67 aa)) is the Importin N-terminal domain.

Belongs to the exportin family.

The protein localises to the nucleus. Its subcellular location is the cytoplasm. In terms of biological role, probably mediates the nuclear export of actin and profilin-actin complexes. In Dictyostelium discoideum (Social amoeba), this protein is Exportin-6 (xpo6).